A 79-amino-acid polypeptide reads, in one-letter code: MATKKEDVKFEDNLAELENIVRKLESGDVALEDAIAEFQKGMKISETLKKTLNEAEETLVKIVGKNDQESDFSPEQKDY.

It belongs to the XseB family. Heterooligomer composed of large and small subunits.

It is found in the cytoplasm. It catalyses the reaction Exonucleolytic cleavage in either 5'- to 3'- or 3'- to 5'-direction to yield nucleoside 5'-phosphates.. Its function is as follows. Bidirectionally degrades single-stranded DNA into large acid-insoluble oligonucleotides, which are then degraded further into small acid-soluble oligonucleotides. The protein is Exodeoxyribonuclease 7 small subunit of Lactococcus lactis subsp. lactis (strain IL1403) (Streptococcus lactis).